The sequence spans 408 residues: UDP-N-acetylglucosamine--dolichyl-phosphate N-acetylglucosaminephosphotransferase (408 aa).

The Lumenal portion of the chain corresponds to methionine 1–proline 10. Residues leucine 11–alanine 38 traverse the membrane as a helical segment. The Cytoplasmic segment spans residues alanine 39–glutamine 58. Residues glutamine 44–leucine 46 and glutamate 56 each bind UDP-N-acetyl-alpha-D-glucosamine. A helical transmembrane segment spans residues glycine 59–phenylalanine 78. The Lumenal segment spans residues leucine 79–proline 91. Residues histidine 92 to leucine 118 form a helical membrane-spanning segment. The Cytoplasmic segment spans residues asparagine 119–proline 121. The chain crosses the membrane as a helical span at residues tryptophan 122–asparagine 143. Lysine 125 is a dolichyl phosphate binding site. The Lumenal portion of the chain corresponds to phenylalanine 144–glycine 166. The N-linked (GlcNAc...) asparagine glycan is linked to asparagine 146. Residues isoleucine 167–isoleucine 186 traverse the membrane as a helical segment. Valine 178–isoleucine 186 is a binding site for dolichyl phosphate. Asparagine 185 contributes to the Mg(2+) binding site. The Cytoplasmic segment spans residues leucine 187–glycine 192. Position 191 (asparagine 191) interacts with UDP-N-acetyl-alpha-D-glucosamine. Residues leucine 193–leucine 213 traverse the membrane as a helical segment. Over glutamate 214–arginine 218 the chain is Lumenal. A helical membrane pass occupies residues aspartate 219 to asparagine 242. Topologically, residues tryptophan 243–valine 250 are cytoplasmic. A helical transmembrane segment spans residues glycine 251–glycine 269. Aspartate 252 is a Mg(2+) binding site. Topologically, residues histidine 270–phenylalanine 271 are lumenal. A helical transmembrane segment spans residues serine 272–leucine 293. Topologically, residues leucine 294 to histidine 375 are cytoplasmic. Position 301–303 (arginine 301–arginine 303) interacts with UDP-N-acetyl-alpha-D-glucosamine. A helical transmembrane segment spans residues glutamate 376–glutamine 400. The Lumenal segment spans residues leucine 401–valine 408.

The protein belongs to the glycosyltransferase 4 family. In terms of assembly, homodimer. The cofactor is Mg(2+).

It localises to the endoplasmic reticulum membrane. The enzyme catalyses a di-trans,poly-cis-dolichyl phosphate + UDP-N-acetyl-alpha-D-glucosamine = an N-acetyl-alpha-D-glucosaminyl-diphospho-di-trans,poly-cis-dolichol + UMP. It functions in the pathway protein modification; protein glycosylation. With respect to regulation, inhibited by natural nucleoside antibiotic tunicamycin, which acts as a structural analog and competitor of UDP-GlcNAc. UDP-N-acetylglucosamine--dolichyl-phosphate N-acetylglucosaminephosphotransferase that operates in the biosynthetic pathway of dolichol-linked oligosaccharides, the glycan precursors employed in protein asparagine (N)-glycosylation. The assembly of dolichol-linked oligosaccharides begins on the cytosolic side of the endoplasmic reticulum membrane and finishes in its lumen. The sequential addition of sugars to dolichol pyrophosphate produces dolichol-linked oligosaccharides containing fourteen sugars, including two GlcNAcs, nine mannoses and three glucoses. Once assembled, the oligosaccharide is transferred from the lipid to nascent proteins by oligosaccharyltransferases. Catalyzes the initial step of dolichol-linked oligosaccharide biosynthesis, transfering GlcNAc-1-P from cytosolic UDP-GlcNAc onto the carrier lipid dolichyl phosphate (P-dolichol), yielding GlcNAc-P-P-dolichol embedded in the cytoplasmic leaflet of the endoplasmic reticulum membrane. The chain is UDP-N-acetylglucosamine--dolichyl-phosphate N-acetylglucosaminephosphotransferase (DPAGT1) from Cricetulus longicaudatus (Long-tailed dwarf hamster).